The chain runs to 250 residues: UPF0736 protein YjbA (250 aa).

The protein belongs to the UPF0736 family.

The polypeptide is UPF0736 protein YjbA (yjbA) (Bacillus subtilis (strain 168)).